Reading from the N-terminus, the 676-residue chain is Envelope fusion protein (676 aa).

The first 16 residues, 1-16 (MSPLALIVLLAWHATA), serve as a signal peptide directing secretion. N-linked (GlcNAc...) asparagine; by host glycans are attached at residues asparagine 76 and asparagine 87. Residues 169-215 (ARELHDLAKTSNALNEQIKEVTDELVNIAKFEEHKQCLERQRDDLCG) are a coiled coil. N-linked (GlcNAc...) asparagine; by host glycans are attached at residues asparagine 266, asparagine 469, asparagine 505, and asparagine 548. Residues 577 to 597 (CATAEAVVACVVLFLVALLLF) traverse the membrane as a helical segment. The N-linked (GlcNAc...) asparagine; by host glycan is linked to asparagine 628.

In terms of processing, N-glycosylated.

The protein localises to the virion membrane. It localises to the host cell membrane. Functionally, envelope glycoprotein which mediates the fusion of viral and host endosomal membranes leading to virus entry into the host cell. The protein is Envelope fusion protein of Lepidoptera (butterflies and moths).